Reading from the N-terminus, the 377-residue chain is Queuine tRNA-ribosyltransferase (377 aa).

Catalysis depends on aspartate 93, which acts as the Proton acceptor. Substrate-binding positions include 93–97 (DSGGF), aspartate 147, glutamine 190, and glycine 216. The RNA binding stretch occupies residues 247–253 (GVGTPDD). The Nucleophile role is filled by aspartate 266. The segment at 271 to 275 (TRAGR) is RNA binding; important for wobble base 34 recognition. Residues cysteine 304, cysteine 306, cysteine 309, and histidine 335 each coordinate Zn(2+).

It belongs to the queuine tRNA-ribosyltransferase family. Homodimer. Within each dimer, one monomer is responsible for RNA recognition and catalysis, while the other monomer binds to the replacement base PreQ1. Zn(2+) serves as cofactor.

It catalyses the reaction 7-aminomethyl-7-carbaguanine + guanosine(34) in tRNA = 7-aminomethyl-7-carbaguanosine(34) in tRNA + guanine. Its pathway is tRNA modification; tRNA-queuosine biosynthesis. Its function is as follows. Catalyzes the base-exchange of a guanine (G) residue with the queuine precursor 7-aminomethyl-7-deazaguanine (PreQ1) at position 34 (anticodon wobble position) in tRNAs with GU(N) anticodons (tRNA-Asp, -Asn, -His and -Tyr). Catalysis occurs through a double-displacement mechanism. The nucleophile active site attacks the C1' of nucleotide 34 to detach the guanine base from the RNA, forming a covalent enzyme-RNA intermediate. The proton acceptor active site deprotonates the incoming PreQ1, allowing a nucleophilic attack on the C1' of the ribose to form the product. After dissociation, two additional enzymatic reactions on the tRNA convert PreQ1 to queuine (Q), resulting in the hypermodified nucleoside queuosine (7-(((4,5-cis-dihydroxy-2-cyclopenten-1-yl)amino)methyl)-7-deazaguanosine). The polypeptide is Queuine tRNA-ribosyltransferase (Granulibacter bethesdensis (strain ATCC BAA-1260 / CGDNIH1)).